The following is a 242-amino-acid chain: MEGWQRAFVLHSRPWSETSLMLDVFTEESGRVRLVAKGARSKRSTLKGALQPFTPLLLRFGGRGEVKTLRSAEAVSLALPLSGITLYSGLYINELLSRVLEYETRFSELFFDYLHCIQSLAGDTGTPEPALRRFELALLGHLGYGVNFTHCAGSGEPVDGTMTYRYREEKGFIASVVIDNKTFTGRQLKALNAREFPDADTLRAAKRFTRMALKPYLGGKPLKSRELFRQFMPKRTVKTHYE.

This sequence belongs to the RecO family. Monomer.

Involved in DNA repair and RecF pathway recombination. This is DNA repair protein RecO from Shigella flexneri.